Reading from the N-terminus, the 360-residue chain is Protein MGF 360-1L (360 aa).

Belongs to the asfivirus MGF 360 family.

Its function is as follows. Plays a role in virus cell tropism, and may be required for efficient virus replication in macrophages. The protein is Protein MGF 360-1L of Ornithodoros (relapsing fever ticks).